Reading from the N-terminus, the 184-residue chain is Small ribosomal subunit protein bS16 (184 aa).

The segment covering 150–160 (KKAAEAAEKAA) has biased composition (basic and acidic residues). Residues 150-184 (KKAAEAAEKAAAEAPAEEATEAPAEEAAATEAAAE) form a disordered region. Residues 164-173 (PAEEATEAPA) show a composition bias toward acidic residues. Over residues 174 to 184 (EEAAATEAAAE) the composition is skewed to low complexity.

The protein belongs to the bacterial ribosomal protein bS16 family.

In Bacteroides thetaiotaomicron (strain ATCC 29148 / DSM 2079 / JCM 5827 / CCUG 10774 / NCTC 10582 / VPI-5482 / E50), this protein is Small ribosomal subunit protein bS16.